The primary structure comprises 37 residues: Large ribosomal subunit protein bL36 (37 aa).

This sequence belongs to the bacterial ribosomal protein bL36 family.

This chain is Large ribosomal subunit protein bL36, found in Trichlorobacter lovleyi (strain ATCC BAA-1151 / DSM 17278 / SZ) (Geobacter lovleyi).